Reading from the N-terminus, the 288-residue chain is Ribosomal RNA small subunit methyltransferase A (288 aa).

S-adenosyl-L-methionine is bound by residues Asn-18, Leu-20, Gly-45, Glu-66, Asp-91, and Asn-118.

Belongs to the class I-like SAM-binding methyltransferase superfamily. rRNA adenine N(6)-methyltransferase family. RsmA subfamily.

The protein localises to the cytoplasm. The catalysed reaction is adenosine(1518)/adenosine(1519) in 16S rRNA + 4 S-adenosyl-L-methionine = N(6)-dimethyladenosine(1518)/N(6)-dimethyladenosine(1519) in 16S rRNA + 4 S-adenosyl-L-homocysteine + 4 H(+). Functionally, specifically dimethylates two adjacent adenosines (A1518 and A1519) in the loop of a conserved hairpin near the 3'-end of 16S rRNA in the 30S particle. May play a critical role in biogenesis of 30S subunits. This is Ribosomal RNA small subunit methyltransferase A from Mannheimia succiniciproducens (strain KCTC 0769BP / MBEL55E).